The chain runs to 424 residues: UDP-sugar transporter protein SLC35A5 (424 aa).

At 1–8 (MEKQCCSH) the chain is on the cytoplasmic side. The helical transmembrane segment at 9–29 (PVICSLSTMYTFLLGAIFIAL) threads the bilayer. The Lumenal portion of the chain corresponds to 30 to 53 (SSSRILLVKYSANEENKYDYLPTT). Residues 54-74 (VNVCSELVKLVFCVLVSFCVI) form a helical membrane-spanning segment. The Cytoplasmic portion of the chain corresponds to 75-93 (KKDHQSRNLKYASWKEFSD). A helical membrane pass occupies residues 94–116 (FMKWSIPAFLYFLDNLIVFYVLS). Residues 117–119 (YLQ) lie on the Lumenal side of the membrane. Residues 120–142 (PAMAVIFSNFSIITTALLFRIVL) traverse the membrane as a helical segment. Residues 143-147 (KRRLN) lie on the Cytoplasmic side of the membrane. Residues 148–168 (WIQWASLLTLFLSIVALTAGT) traverse the membrane as a helical segment. The Lumenal portion of the chain corresponds to 169 to 228 (KTLQHNLAGRGFHHDAFFSPSNSCLLFRSECPRKDNCTAKEWTFPEAKWNTTARVFSHIR). N-linked (GlcNAc...) asparagine glycosylation occurs at asparagine 204. Residues 229-249 (LGMGHVLIIVQCFISSMANIY) traverse the membrane as a helical segment. At 250–263 (NEKILKEGNQLTES) the chain is on the cytoplasmic side. A helical membrane pass occupies residues 264–284 (IFIQNSKLYFFGILFNGLTLG). At 285–303 (LQRSNRDQIKNCGFFYGHS) the chain is on the lumenal side. A helical transmembrane segment spans residues 304–324 (AFSVALIFVTAFQGLSVAFIL). The Cytoplasmic portion of the chain corresponds to 325-330 (KFLDNM). A helical transmembrane segment spans residues 331-351 (FHVLMAQVTTVIITTVSVLVF). Residues 352 to 354 (DFR) are Lumenal-facing. Residues 355 to 375 (PSLEFFLEAPSVLLSIFIYNA) traverse the membrane as a helical segment. The Cytoplasmic portion of the chain corresponds to 376 to 424 (SKPQVPEYAPRQERIRDLSGNLWERSSGDGEELERLTKPKSDESDEDTF). A phosphoserine mark is found at serine 394, serine 416, and serine 419. The tract at residues 397–424 (LWERSSGDGEELERLTKPKSDESDEDTF) is disordered. A compositionally biased stretch (basic and acidic residues) spans 408–417 (LERLTKPKSD).

Belongs to the nucleotide-sugar transporter family. SLC35A subfamily. In terms of assembly, probably forms homooligomers and heterooligomers with SLC35A1, SLC35A2, SLC35A3 and SLC35A4.

It localises to the golgi apparatus membrane. The enzyme catalyses UMP(out) + UDP-alpha-D-glucuronate(in) = UMP(in) + UDP-alpha-D-glucuronate(out). It catalyses the reaction UMP(out) + UDP-N-acetyl-alpha-D-glucosamine(in) = UMP(in) + UDP-N-acetyl-alpha-D-glucosamine(out). The catalysed reaction is UDP-N-acetyl-alpha-D-galactosamine(in) + UMP(out) = UDP-N-acetyl-alpha-D-galactosamine(out) + UMP(in). In terms of biological role, probable UDP-sugar:UMP transmembrane antiporter involved in UDP-alpha-D-glucuronate/UDP-GlcA, UDP-GlcNAc/UDP-N-acetyl-alpha-D-glucosamine and UDP-N-acetyl-alpha-D-galactosamine/UDP-GalNAc transport from the cytosol to the lumen of the Golgi. This is UDP-sugar transporter protein SLC35A5 from Homo sapiens (Human).